We begin with the raw amino-acid sequence, 493 residues long: MTELNKLSVADSLKGLKNKEFTSKELVNAHIKQIEKHKNLNAYVTETFDLALKQAEEADQSYAKNHSRTLEGIPFAAKDLFCTKGIRTTACSNILREFIPNYESGVTQNIFNKGGVMLGKTNMDEFAMGSANITSCFGNVISPWKALDDGADLVPGGSSGGSAAAVSGFMATAALGSDTGGSVRQPASFTGLVGFKPTYGRCSRYGMVSFASSLDQAGIFTRSVLDSSIMLEAMIGFDERDSTSIKMEVPQLQPAIGSSIKGMKIGVPLSLGEGGIIEPDIMKMWHSTIELLKDAGAEIIDISLPHAKYGVAVYYVIAPAEASSNLSRYDGVRYGLRVEKENMSLDEMYEITRSSGFGDEVKRRIMIGTYVLSSSFMDAYYLKAQKVRRLVADDFNNAFAKVDAILLPSAPTEAFRIGEKQNDPTIMYLNDLFTIPASLAGLPCVSVPAGLSNRGLPLGMQVICKQLDEYNVLRVASAIEAGVKHIKFEPVGF.

Residues K78 and S158 each act as charge relay system in the active site. The active-site Acyl-ester intermediate is S182.

It belongs to the amidase family. GatA subfamily. As to quaternary structure, heterotrimer of A, B and C subunits.

The enzyme catalyses L-glutamyl-tRNA(Gln) + L-glutamine + ATP + H2O = L-glutaminyl-tRNA(Gln) + L-glutamate + ADP + phosphate + H(+). Functionally, allows the formation of correctly charged Gln-tRNA(Gln) through the transamidation of misacylated Glu-tRNA(Gln) in organisms which lack glutaminyl-tRNA synthetase. The reaction takes place in the presence of glutamine and ATP through an activated gamma-phospho-Glu-tRNA(Gln). The polypeptide is Glutamyl-tRNA(Gln) amidotransferase subunit A (Rickettsia bellii (strain OSU 85-389)).